A 184-amino-acid polypeptide reads, in one-letter code: Adenine phosphoribosyltransferase (184 aa).

The protein belongs to the purine/pyrimidine phosphoribosyltransferase family. In terms of assembly, homodimer.

It localises to the cytoplasm. The catalysed reaction is AMP + diphosphate = 5-phospho-alpha-D-ribose 1-diphosphate + adenine. It participates in purine metabolism; AMP biosynthesis via salvage pathway; AMP from adenine: step 1/1. Functionally, catalyzes a salvage reaction resulting in the formation of AMP, that is energically less costly than de novo synthesis. The sequence is that of Adenine phosphoribosyltransferase from Shewanella baltica (strain OS223).